Consider the following 318-residue polypeptide: Acetyl-coenzyme A carboxylase carboxyl transferase subunit alpha (318 aa).

One can recognise a CoA carboxyltransferase C-terminal domain in the interval 31-292; the sequence is DLIKEVSALE…KDAILRQLEL (262 aa).

The protein belongs to the AccA family. In terms of assembly, acetyl-CoA carboxylase is a heterohexamer composed of biotin carboxyl carrier protein (AccB), biotin carboxylase (AccC) and two subunits each of ACCase subunit alpha (AccA) and ACCase subunit beta (AccD).

Its subcellular location is the cytoplasm. It carries out the reaction N(6)-carboxybiotinyl-L-lysyl-[protein] + acetyl-CoA = N(6)-biotinyl-L-lysyl-[protein] + malonyl-CoA. The protein operates within lipid metabolism; malonyl-CoA biosynthesis; malonyl-CoA from acetyl-CoA: step 1/1. Component of the acetyl coenzyme A carboxylase (ACC) complex. First, biotin carboxylase catalyzes the carboxylation of biotin on its carrier protein (BCCP) and then the CO(2) group is transferred by the carboxyltransferase to acetyl-CoA to form malonyl-CoA. This Hydrogenovibrio crunogenus (strain DSM 25203 / XCL-2) (Thiomicrospira crunogena) protein is Acetyl-coenzyme A carboxylase carboxyl transferase subunit alpha.